We begin with the raw amino-acid sequence, 365 residues long: Aspartate-semialdehyde dehydrogenase (365 aa).

The NADP(+) site is built by T15, G16, T17, V18, S40, S43, L89, and D90. C156 (acyl-thioester intermediate) is an active-site residue. Residue G188 participates in NADP(+) binding. The active-site Proton acceptor is H255. Residue N342 coordinates NADP(+).

It belongs to the aspartate-semialdehyde dehydrogenase family. Homotetramer; dimer of dimers.

It is found in the cytoplasm. It localises to the cytosol. The protein localises to the nucleus. It catalyses the reaction L-aspartate 4-semialdehyde + phosphate + NADP(+) = 4-phospho-L-aspartate + NADPH + H(+). Its pathway is amino-acid biosynthesis; L-methionine biosynthesis via de novo pathway; L-homoserine from L-aspartate: step 2/3. The protein operates within amino-acid biosynthesis; L-threonine biosynthesis; L-threonine from L-aspartate: step 2/5. Its activity is regulated as follows. Inhibited by the competitive inhibitor 1,4-benzoquinone and derivates such as 2-chloro-3-methoxy-1,4-naphthoquinone, 2,3-dichloro-1,4-naphthoquinone, 2-chloro-1,4-naphthoquinone, 2-bromo-1,4-naphthoquinone and 2,3-dichloro-5,8-dihydroxy-1,4-naphthoquinone. Its function is as follows. Catalyzes the NADPH-dependent formation of L-aspartate 4-semialdehyde (L-ASA) by the reductive dephosphorylation of 4-phospho-L-aspartate. Mediates the second step in the biosynthesis of amino acids that derive from aspartate (the aspartate family of amino acids), including methioinine and threonine, the latter of which is a precursor to isoleucine. In Cryptococcus neoformans var. neoformans serotype D (strain JEC21 / ATCC MYA-565) (Filobasidiella neoformans), this protein is Aspartate-semialdehyde dehydrogenase.